The primary structure comprises 240 residues: Purine nucleoside phosphorylase RC0672 (240 aa).

Positions 60, 96, and 113 each coordinate Zn(2+).

Belongs to the purine nucleoside phosphorylase YfiH/LACC1 family. In terms of assembly, homodimer. Cu(2+) is required as a cofactor. Requires Zn(2+) as cofactor.

The catalysed reaction is adenosine + phosphate = alpha-D-ribose 1-phosphate + adenine. It catalyses the reaction S-methyl-5'-thioadenosine + phosphate = 5-(methylsulfanyl)-alpha-D-ribose 1-phosphate + adenine. The enzyme catalyses inosine + phosphate = alpha-D-ribose 1-phosphate + hypoxanthine. It carries out the reaction adenosine + H2O + H(+) = inosine + NH4(+). Its function is as follows. Purine nucleoside enzyme that catalyzes the phosphorolysis of adenosine and inosine nucleosides, yielding D-ribose 1-phosphate and the respective free bases, adenine and hypoxanthine. Also catalyzes the phosphorolysis of S-methyl-5'-thioadenosine into adenine and S-methyl-5-thio-alpha-D-ribose 1-phosphate. Also has adenosine deaminase activity. This Rickettsia conorii (strain ATCC VR-613 / Malish 7) protein is Purine nucleoside phosphorylase RC0672.